We begin with the raw amino-acid sequence, 212 residues long: Dephospho-CoA kinase (212 aa).

One can recognise a DPCK domain in the interval 8-212 (LVGVTGGLGS…QLLQQAMLRR (205 aa)). 16-21 (GSGKSM) serves as a coordination point for ATP.

Belongs to the CoaE family.

It localises to the cytoplasm. It carries out the reaction 3'-dephospho-CoA + ATP = ADP + CoA + H(+). Its pathway is cofactor biosynthesis; coenzyme A biosynthesis; CoA from (R)-pantothenate: step 5/5. In terms of biological role, catalyzes the phosphorylation of the 3'-hydroxyl group of dephosphocoenzyme A to form coenzyme A. The protein is Dephospho-CoA kinase of Chlorobium chlorochromatii (strain CaD3).